We begin with the raw amino-acid sequence, 62 residues long: Large ribosomal subunit protein uL29 (62 aa).

This sequence belongs to the universal ribosomal protein uL29 family.

The sequence is that of Large ribosomal subunit protein uL29 from Enterococcus faecalis (strain ATCC 700802 / V583).